We begin with the raw amino-acid sequence, 380 residues long: 3-isopropylmalate dehydratase large subunit (380 aa).

Cysteine 262, cysteine 320, and cysteine 323 together coordinate [4Fe-4S] cluster.

It belongs to the aconitase/IPM isomerase family. LeuC type 2 subfamily. Heterodimer of LeuC and LeuD. [4Fe-4S] cluster serves as cofactor.

It carries out the reaction (2R,3S)-3-isopropylmalate = (2S)-2-isopropylmalate. It functions in the pathway amino-acid biosynthesis; L-leucine biosynthesis; L-leucine from 3-methyl-2-oxobutanoate: step 2/4. Its function is as follows. Catalyzes the isomerization between 2-isopropylmalate and 3-isopropylmalate, via the formation of 2-isopropylmaleate. The chain is 3-isopropylmalate dehydratase large subunit from Pyrococcus horikoshii (strain ATCC 700860 / DSM 12428 / JCM 9974 / NBRC 100139 / OT-3).